A 205-amino-acid polypeptide reads, in one-letter code: Outer-membrane lipoprotein carrier protein (205 aa).

An N-terminal signal peptide occupies residues 1–22; that stretch reads MKKIVIVISILLTSFLSSAVSA.

It belongs to the LolA family. Monomer.

The protein resides in the periplasm. Its function is as follows. Participates in the translocation of lipoproteins from the inner membrane to the outer membrane. Only forms a complex with a lipoprotein if the residue after the N-terminal Cys is not an aspartate (The Asp acts as a targeting signal to indicate that the lipoprotein should stay in the inner membrane). The sequence is that of Outer-membrane lipoprotein carrier protein from Psychromonas ingrahamii (strain DSM 17664 / CCUG 51855 / 37).